The sequence spans 95 residues: Sec-independent protein translocase protein TatA (95 aa).

A helical transmembrane segment spans residues 1–21; sequence MGGISIWQLLIIALIVVLLFG. Residues 50–61 are compositionally biased toward basic and acidic residues; sequence KALEDNAADKPA. A disordered region spans residues 50–95; sequence KALEDNAADKPAADAAKVTETAKVAETAPVAETAEKKAESKGKEQA. Positions 62-81 are enriched in low complexity; sequence ADAAKVTETAKVAETAPVAE. Over residues 82 to 95 the composition is skewed to basic and acidic residues; the sequence is TAEKKAESKGKEQA.

This sequence belongs to the TatA/E family. As to quaternary structure, the Tat system comprises two distinct complexes: a TatABC complex, containing multiple copies of TatA, TatB and TatC subunits, and a separate TatA complex, containing only TatA subunits. Substrates initially bind to the TatABC complex, which probably triggers association of the separate TatA complex to form the active translocon.

It localises to the cell inner membrane. Its function is as follows. Part of the twin-arginine translocation (Tat) system that transports large folded proteins containing a characteristic twin-arginine motif in their signal peptide across membranes. TatA could form the protein-conducting channel of the Tat system. The sequence is that of Sec-independent protein translocase protein TatA from Shewanella halifaxensis (strain HAW-EB4).